Here is a 262-residue protein sequence, read N- to C-terminus: Acyl-[acyl-carrier-protein]--UDP-N-acetylglucosamine O-acyltransferase (262 aa).

Belongs to the transferase hexapeptide repeat family. LpxA subfamily. In terms of assembly, homotrimer.

It localises to the cytoplasm. It catalyses the reaction a (3R)-hydroxyacyl-[ACP] + UDP-N-acetyl-alpha-D-glucosamine = a UDP-3-O-[(3R)-3-hydroxyacyl]-N-acetyl-alpha-D-glucosamine + holo-[ACP]. The protein operates within glycolipid biosynthesis; lipid IV(A) biosynthesis; lipid IV(A) from (3R)-3-hydroxytetradecanoyl-[acyl-carrier-protein] and UDP-N-acetyl-alpha-D-glucosamine: step 1/6. Functionally, involved in the biosynthesis of lipid A, a phosphorylated glycolipid that anchors the lipopolysaccharide to the outer membrane of the cell. The sequence is that of Acyl-[acyl-carrier-protein]--UDP-N-acetylglucosamine O-acyltransferase from Janthinobacterium sp. (strain Marseille) (Minibacterium massiliensis).